We begin with the raw amino-acid sequence, 424 residues long: Histidine--tRNA ligase (424 aa).

This sequence belongs to the class-II aminoacyl-tRNA synthetase family. As to quaternary structure, homodimer.

The protein resides in the cytoplasm. It carries out the reaction tRNA(His) + L-histidine + ATP = L-histidyl-tRNA(His) + AMP + diphosphate + H(+). The protein is Histidine--tRNA ligase of Escherichia coli O127:H6 (strain E2348/69 / EPEC).